Here is a 188-residue protein sequence, read N- to C-terminus: Early nodulin-like protein 5 (188 aa).

Positions 1–24 are cleaved as a signal peptide; the sequence is MDSSKKIIIVMFLVTFYMFSCVSS. Residues 25–128 form the Phytocyanin domain; sequence TEFEVGGENG…GQKMIVKVME (104 aa). The cysteines at positions 82 and 116 are disulfide-linked. The segment at 127 to 157 is disordered; the sequence is METESSTESPPPSSSSSSSSSSSLPASTPKA. Residues 129 to 155 show a composition bias toward low complexity; it reads TESSTESPPPSSSSSSSSSSSLPASTP. Ser-170 carries the GPI-anchor amidated serine lipid modification. Residues 171–188 constitute a propeptide, removed in mature form; it reads SSGFVVSAVLIVSVFGLV.

The protein belongs to the early nodulin-like (ENODL) family. In terms of tissue distribution, mostly expressed in leaves and flowers, and, to a lower extent, in stems.

It is found in the cell membrane. Its function is as follows. May act as a carbohydrate transporter. Mainly required for reproductive functions. This is Early nodulin-like protein 5 from Arabidopsis thaliana (Mouse-ear cress).